The following is a 335-amino-acid chain: Probable cytosolic iron-sulfur protein assembly protein Ciao1 (335 aa).

WD repeat units follow at residues 12 to 51 (GHKG…WSTK), 57 to 96 (GHKR…FECN), 101 to 140 (GHEN…EFEC), 146 to 185 (AHTQ…SDWD), 192 to 231 (SHTS…NDAG), 250 to 289 (QHSR…KRDE), and 301 to 335 (AHEQ…KVDD).

It belongs to the WD repeat CIA1 family.

Its function is as follows. Essential component of the cytosolic iron-sulfur (Fe/S) protein assembly machinery. Required for the maturation of extramitochondrial Fe/S proteins. This is Probable cytosolic iron-sulfur protein assembly protein Ciao1 from Drosophila pseudoobscura pseudoobscura (Fruit fly).